A 188-amino-acid polypeptide reads, in one-letter code: dCTP deaminase (188 aa).

Residues Lys111–Arg116, Thr135–Glu137, Gln156, Tyr170, and Gln180 each bind dCTP. Glu137 functions as the Proton donor/acceptor in the catalytic mechanism.

The protein belongs to the dCTP deaminase family. As to quaternary structure, homotrimer.

The enzyme catalyses dCTP + H2O + H(+) = dUTP + NH4(+). It functions in the pathway pyrimidine metabolism; dUMP biosynthesis; dUMP from dCTP (dUTP route): step 1/2. Functionally, catalyzes the deamination of dCTP to dUTP. The sequence is that of dCTP deaminase from Ectopseudomonas mendocina (strain ymp) (Pseudomonas mendocina).